The primary structure comprises 167 residues: MTTRSLSTFLTSFLLVSLDWVSKLVVLLKSCQLSPHSPALLYSYVWGHFSFLIVPSFNEGAAFGLFAQYKIPLLIFRVFVILCLFLFLGIKFRSLHIRTRIALTLILAGALGNVGDILFHGKVVDFLSINYYSWSFPSFNLADAFISLGTLLLVGHLYFSKEDKKYF.

4 consecutive transmembrane segments (helical) span residues 8 to 28 (TFLTSFLLVSLDWVSKLVVLL), 46 to 66 (WGHFSFLIVPSFNEGAAFGLF), 70 to 90 (KIPLLIFRVFVILCLFLFLGI), and 101 to 121 (IALTLILAGALGNVGDILFHG). Residues Asp-125 and Asp-143 contribute to the active site. Residues 139–159 (FNLADAFISLGTLLLVGHLYF) traverse the membrane as a helical segment.

This sequence belongs to the peptidase A8 family.

The protein resides in the cell inner membrane. It catalyses the reaction Release of signal peptides from bacterial membrane prolipoproteins. Hydrolyzes -Xaa-Yaa-Zaa-|-(S,diacylglyceryl)Cys-, in which Xaa is hydrophobic (preferably Leu), and Yaa (Ala or Ser) and Zaa (Gly or Ala) have small, neutral side chains.. It functions in the pathway protein modification; lipoprotein biosynthesis (signal peptide cleavage). In terms of biological role, this protein specifically catalyzes the removal of signal peptides from prolipoproteins. In Chlamydia muridarum (strain MoPn / Nigg), this protein is Lipoprotein signal peptidase.